A 368-amino-acid chain; its full sequence is MAEKDNIIELRGVTKNFEDTCALDNIDLEIRNGEFLTLLGPSGCGKTTILRLISGFEKPDAGVITLKGQRMDDAPPEARQVNTVFQNYALFPHMSVRENVGFGLRMQRRPKDEIARRVHDALRMVHLEAHADRRPRQLSGGQQQRVAIARAVVNNPLVLLLDEPFSALDYKLRKQMQLEIKHLQRQLGITFVFVTHDQEEAFAMSDRVVVMNDGKIEQIGSPQEIYEEPANLYVARFVGEINILNAVIAANHGDGLYDAVIEGVTFPIRSQRTFAPGDKVNVLLRPEDLRVYTLTEDRPAGPHLTGRIEESVYKGATVDLIVTLSDGRRLMAAEFFNEDDVDINYNPGETVTVSWVDGWEVVLPDGEA.

An ABC transporter domain is found at I8–V238. Residue G40–T47 coordinates ATP.

The protein belongs to the ABC transporter superfamily. Spermidine/putrescine importer (TC 3.A.1.11.1) family. As to quaternary structure, the complex is composed of two ATP-binding proteins (PotA), two transmembrane proteins (PotB and PotC) and a solute-binding protein (PotD).

Its subcellular location is the cell inner membrane. The catalysed reaction is ATP + H2O + polyamine-[polyamine-binding protein]Side 1 = ADP + phosphate + polyamineSide 2 + [polyamine-binding protein]Side 1.. Functionally, part of the ABC transporter complex PotABCD involved in spermidine/putrescine import. Responsible for energy coupling to the transport system. This is Spermidine/putrescine import ATP-binding protein PotA from Nitratidesulfovibrio vulgaris (strain ATCC 29579 / DSM 644 / CCUG 34227 / NCIMB 8303 / VKM B-1760 / Hildenborough) (Desulfovibrio vulgaris).